The sequence spans 1497 residues: Collagen alpha-2(V) chain (1497 aa).

Positions 1–26 (MMANWVGARPLLILSVLLGYCVSIKA) are cleaved as a signal peptide. Residues 38 to 96 (IACTQHGQMYLNRDIWKPSPCQICVCDNGAILCDKIECPEVLNCANPITPTGECCPVCP) enclose the VWFC domain. Residues 103-1265 (TSFGRGRKGQ…PDDTNKTDPG (1163 aa)) are disordered. Positions 141-143 (RGD) match the Cell attachment site motif. Low complexity predominate over residues 155-164 (PQGIDGEPGV). A compositionally biased stretch (pro residues) spans 168-180 (PGAPGPPGHPSHP). A compositionally biased stretch (low complexity) spans 210–225 (PGSVGPVGPRGPQGLQ). Residues 234–246 (AGPPGEPGEPGPM) are compositionally biased toward pro residues. Proline 288, proline 291, and proline 294 each carry 4-hydroxyproline. Composition is skewed to low complexity over residues 320–338 (EAGP…PRGM) and 425–441 (TPGA…SGPP). The Cell attachment site signature appears at 504-506 (RGD). The span at 550 to 559 (GPKGGQGDPG) shows a compositional bias: gly residues. Residues 602–611 (SIGIRGQPGS) show a composition bias toward low complexity. Residues proline 609 and proline 615 each carry the 4-hydroxyproline modification. A compositionally biased stretch (basic and acidic residues) spans 708–719 (RGERGNPGERGE). The span at 730-739 (GMAGGHGPDG) shows a compositional bias: gly residues. Positions 744–756 (PGPTGTIGDTGPP) are enriched in low complexity. Positions 774–785 (KGDRGGIGEKGA) are enriched in basic and acidic residues. 2 stretches are compositionally biased toward low complexity: residues 824-839 (PPGS…ENGP) and 878-891 (LAGS…HGVP). Positions 892 to 901 (GLKGGRGTQG) are enriched in gly residues. A compositionally biased stretch (pro residues) spans 917–927 (PPGPAGAPGPA). 3 short sequence motifs (cell attachment site) span residues 942-944 (RGD), 1065-1067 (RGD), and 1068-1070 (RGD). The segment covering 1061–1070 (AVGERGDRGD) has biased composition (basic and acidic residues). Residues 1091–1112 (APGDAGQRGEPGSRGPVGPPGR) are compositionally biased toward low complexity. 2 short sequence motifs (cell attachment site) span residues 1125–1127 (RGD) and 1134–1136 (RGD). The span at 1125–1139 (RGDKGDNGDRGDRGQ) shows a compositional bias: basic and acidic residues. Composition is skewed to pro residues over residues 1169–1179 (PFGPRGPPGPV) and 1209–1224 (EGPP…PGPP). Residues 1228 to 1497 (TAALGDIMGH…GLDIGPVCFM (270 aa)) constitute a propeptide, C-terminal propeptide. A glycan (N-linked (GlcNAc...) asparagine) is linked at asparagine 1260. One can recognise a Fibrillar collagen NC1 domain in the interval 1264-1497 (PGIHVTLKSL…GLDIGPVCFM (234 aa)). Cystine bridges form between cysteine 1294/cysteine 1326, cysteine 1334/cysteine 1495, and cysteine 1403/cysteine 1448. Residues aspartate 1312, asparagine 1314, glutamine 1315, and aspartate 1320 each coordinate Ca(2+). An N-linked (GlcNAc...) asparagine glycan is attached at asparagine 1398.

It belongs to the fibrillar collagen family. Trimers of two alpha 1(V) and one alpha 2(V) chains expressed in most tissues and trimers of one alpha 1(V), one alpha 2(V), and one alpha 3(V) chains with a more limited distribution of expression. Prolines at the third position of the tripeptide repeating unit (G-X-P) are hydroxylated in some or all of the chains. Probably 3-hydroxylated on prolines by LEPREL1. In terms of processing, hydroxylation on proline residues within the sequence motif, GXPG, is most likely to be 4-hydroxy as this fits the requirement for 4-hydroxylation in vertebrates.

It localises to the secreted. The protein resides in the extracellular space. The protein localises to the extracellular matrix. In terms of biological role, type V collagen is a member of group I collagen (fibrillar forming collagen). It is a minor connective tissue component of nearly ubiquitous distribution. Type V collagen binds to DNA, heparan sulfate, thrombospondin, heparin, and insulin. Type V collagen is a key determinant in the assembly of tissue-specific matrices. The chain is Collagen alpha-2(V) chain from Mus musculus (Mouse).